A 259-amino-acid chain; its full sequence is Troponin T, fast skeletal muscle (259 aa).

The segment covering 1–36 (MSDEETEQVEEQYEEEEEAQEEEVQEEAPEPEEVQE) has biased composition (acidic residues). The segment at 1-62 (MSDEETEQVE…EKVDFDDIQK (62 aa)) is disordered. Ser2 bears the N-acetylserine mark. Ser2 bears the Phosphoserine mark. Over residues 50–62 (PEGEKVDFDDIQK) the composition is skewed to basic and acidic residues. Ser78 is modified (phosphoserine). A compositionally biased stretch (basic and acidic residues) spans 101–143 (RAERAEQQRIRAEKERERQNRLAEEKARREEEDAKRRAEDDLK). The disordered stretch occupies residues 101 to 180 (RAERAEQQRI…TAREMKKKIL (80 aa)). 3 positions are modified to phosphoserine: Ser149, Ser156, and Ser157. Positions 171–180 (TAREMKKKIL) are enriched in basic and acidic residues. A Phosphoserine modification is found at Ser193. Tyr209 is subject to Phosphotyrosine. The tract at residues 235-259 (RIDQAQKHSKKAGATAKGKVGGRWK) is disordered.

Belongs to the troponin T family.

Functionally, troponin T is the tropomyosin-binding subunit of troponin, the thin filament regulatory complex which confers calcium-sensitivity to striated muscle actomyosin ATPase activity. This Rattus norvegicus (Rat) protein is Troponin T, fast skeletal muscle (Tnnt3).